We begin with the raw amino-acid sequence, 383 residues long: 8-amino-7-oxononanoate synthase (383 aa).

R22 contributes to the substrate binding site. 109–110 (GF) lines the pyridoxal 5'-phosphate pocket. Residue H134 participates in substrate binding. Residues S178, H206, and T232 each contribute to the pyridoxal 5'-phosphate site. Residue K235 is modified to N6-(pyridoxal phosphate)lysine. Residue T348 participates in substrate binding.

It belongs to the class-II pyridoxal-phosphate-dependent aminotransferase family. BioF subfamily. As to quaternary structure, homodimer. Requires pyridoxal 5'-phosphate as cofactor.

It carries out the reaction 6-carboxyhexanoyl-[ACP] + L-alanine + H(+) = (8S)-8-amino-7-oxononanoate + holo-[ACP] + CO2. The protein operates within cofactor biosynthesis; biotin biosynthesis. Its function is as follows. Catalyzes the decarboxylative condensation of pimeloyl-[acyl-carrier protein] and L-alanine to produce 8-amino-7-oxononanoate (AON), [acyl-carrier protein], and carbon dioxide. This is 8-amino-7-oxononanoate synthase from Vibrio campbellii (strain ATCC BAA-1116).